The following is a 257-amino-acid chain: Ribonuclease HII (257 aa).

Residues 70 to 257 enclose the RNase H type-2 domain; sequence EFIAGIDEVG…PIKSMVAGGN (188 aa). The a divalent metal cation site is built by Asp76, Glu77, and Asp168.

The protein belongs to the RNase HII family. Requires Mn(2+) as cofactor. The cofactor is Mg(2+).

It is found in the cytoplasm. The enzyme catalyses Endonucleolytic cleavage to 5'-phosphomonoester.. Its function is as follows. Endonuclease that specifically degrades the RNA of RNA-DNA hybrids. This chain is Ribonuclease HII, found in Streptococcus suis (strain 98HAH33).